The sequence spans 1184 residues: von Willebrand factor A domain-containing protein 3A (1184 aa).

A signal peptide spans 1–24 (MKKYRKISIGCFAMATQTSHVFHG). A disordered region spans residues 40–62 (GRDSKKPLKQKNMNGLGQNSDNG). Residues 50–62 (KNMNGLGQNSDNG) show a composition bias toward polar residues. Positions 333 to 357 (TSRDMDELLAEIQKAQSLLSHVQAL) form a coiled coil. Residues 511–708 (RVVVLLDISA…SIMSEMEKAL (198 aa)) enclose the VWFA 1 domain. N709 carries an N-linked (GlcNAc...) asparagine glycan. Residues 729-780 (LGSSALPKEKPKTLQLRSQPKKLCPPRPTVPLGARMSIKDDPDREKSPPLKS) form a disordered region. Over residues 765–776 (SIKDDPDREKSP) the composition is skewed to basic and acidic residues. The 173-residue stretch at 959–1131 (KVCILLDTSG…KIHSLLTKGF (173 aa)) folds into the VWFA 2 domain.

It localises to the secreted. The chain is von Willebrand factor A domain-containing protein 3A (VWA3A) from Homo sapiens (Human).